We begin with the raw amino-acid sequence, 475 residues long: Ammonium transporter Rh type C (475 aa).

Topologically, residues 1-20 (MGCVQSFRNFCDRPKNTNVR) are cytoplasmic. Residues 21–41 (ISLPAVCFVWQIAMIILFGVF) traverse the membrane as a helical segment. The Extracellular segment spans residues 42-73 (IRYNEEADTHWVEYRKKENISSDIENDFYFRY). The N-linked (GlcNAc...) asparagine glycan is linked to N60. Residues 74–94 (PSFQDVHVMIFVGFGFLMTFL) traverse the membrane as a helical segment. Residues 95–98 (KRYS) are Cytoplasmic-facing. Residues 99-119 (FGAVGFNFLIAAFGLQWALLM) form a helical membrane-spanning segment. Topologically, residues 120–138 (QGWFHSLDYTDGKIKIGIE) are extracellular. Residues 139-159 (NLINADFCVAGCLIAYGAVLG) form a helical membrane-spanning segment. The Cytoplasmic segment spans residues 160–167 (KVSPVQLM). The helical transmembrane segment at 168-188 (VLTLFGITLFAVEEYIILNLI) threads the bilayer. Residues 189–193 (HARDA) are Extracellular-facing. The chain crosses the membrane as a helical span at residues 194-214 (GGSMVIHTFGGYYGLSISWML). At 215–233 (YRPNLEQSSNLQGSVYQSD) the chain is on the cytoplasmic side. A helical membrane pass occupies residues 234–254 (VFAMIGTLFLWMFWPSFNSAI). At 255 to 265 (TDHGDGQHRAA) the chain is on the extracellular side. Residues 266 to 286 (INTYLALASTVLTTVAISSLF) form a helical membrane-spanning segment. Residues 287–299 (QKHGKLDMVHIQN) are Cytoplasmic-facing. Residues 300–320 (STLAGGVAVGTAAEFMLMPYG) form a helical membrane-spanning segment. Position 321 (S321) is a topological domain, extracellular. Residues 322-342 (LIVGFCCGIISTLGYIYLTPF) form a helical membrane-spanning segment. The Cytoplasmic segment spans residues 343–357 (MEKYLKIQDTCGIHN). A helical membrane pass occupies residues 358–378 (LHAMPGLIGGIVGAITAAAAT). At 379 to 410 (ESVYGKEGLVNTFDFVGPFKNMVPTTQGGHQA) the chain is on the extracellular side. A helical membrane pass occupies residues 411–431 (AGLCVAICFGIGGGIMVGCIL). Residues 432–475 (RLPIWCDPADDNCFNDEPYWELPEEEEIIPPILHYNNHMVNKDV) are Cytoplasmic-facing.

Belongs to the ammonium transporter (TC 2.A.49) family. Rh subfamily. Homotrimer.

It localises to the apical cell membrane. Functions as an ammonia transporter. May play a role in the elimination of ammonia in the gill. The polypeptide is Ammonium transporter Rh type C (rhcg) (Tetraodon nigroviridis (Spotted green pufferfish)).